A 169-amino-acid chain; its full sequence is Cell division inhibitor SulA (169 aa).

A compositionally biased stretch (polar residues) spans 1–16 (MFTSAHANRSPLTSAS). The tract at residues 1–20 (MFTSAHANRSPLTSASVRRP) is disordered. The tract at residues 106–112 (ALRTGNY) is ftsZ binding. The lon protease binding stretch occupies residues 162 to 169 (KIHSNLYH).

Belongs to the SulA family. As to quaternary structure, interacts with FtsZ. In terms of processing, is rapidly cleaved and degraded by the Lon protease once DNA damage is repaired.

Component of the SOS system and an inhibitor of cell division. Accumulation of SulA causes rapid cessation of cell division and the appearance of long, non-septate filaments. In the presence of GTP, binds a polymerization-competent form of FtsZ in a 1:1 ratio, thus inhibiting FtsZ polymerization and therefore preventing it from participating in the assembly of the Z ring. This mechanism prevents the premature segregation of damaged DNA to daughter cells during cell division. The sequence is that of Cell division inhibitor SulA from Klebsiella aerogenes (Enterobacter aerogenes).